Consider the following 148-residue polypeptide: Large ribosomal subunit protein bL9 (148 aa).

In terms of assembly, part of the 50S ribosomal subunit.

In terms of biological role, binds to the 23S rRNA. Extends more that 50 Angstroms beyond the surface of the 70S ribosome. The polypeptide is Large ribosomal subunit protein bL9 (rplI) (Thermus thermophilus (strain ATCC 27634 / DSM 579 / HB8)).